The primary structure comprises 68 residues: Large ribosomal subunit protein uL29 (68 aa).

This sequence belongs to the universal ribosomal protein uL29 family.

This Erythrobacter litoralis (strain HTCC2594) protein is Large ribosomal subunit protein uL29.